The chain runs to 620 residues: Proline--tRNA ligase (620 aa).

This sequence belongs to the class-II aminoacyl-tRNA synthetase family. ProS type 1 subfamily. In terms of assembly, homodimer.

The protein resides in the cytoplasm. The catalysed reaction is tRNA(Pro) + L-proline + ATP = L-prolyl-tRNA(Pro) + AMP + diphosphate. In terms of biological role, catalyzes the attachment of proline to tRNA(Pro) in a two-step reaction: proline is first activated by ATP to form Pro-AMP and then transferred to the acceptor end of tRNA(Pro). As ProRS can inadvertently accommodate and process non-cognate amino acids such as alanine and cysteine, to avoid such errors it has two additional distinct editing activities against alanine. One activity is designated as 'pretransfer' editing and involves the tRNA(Pro)-independent hydrolysis of activated Ala-AMP. The other activity is designated 'posttransfer' editing and involves deacylation of mischarged Ala-tRNA(Pro). The misacylated Cys-tRNA(Pro) is not edited by ProRS. The chain is Proline--tRNA ligase from Streptococcus suis (strain 98HAH33).